Here is a 109-residue protein sequence, read N- to C-terminus: ATP-dependent Clp protease adapter protein ClpS (109 aa).

The tract at residues 1 to 25 (MSERKEGDSGAGVRSAVITQTKPKT) is disordered.

Belongs to the ClpS family. In terms of assembly, binds to the N-terminal domain of the chaperone ClpA.

Involved in the modulation of the specificity of the ClpAP-mediated ATP-dependent protein degradation. This chain is ATP-dependent Clp protease adapter protein ClpS, found in Phenylobacterium zucineum (strain HLK1).